Reading from the N-terminus, the 628-residue chain is Biosynthetic arginine decarboxylase (628 aa).

Lys99 is modified (N6-(pyridoxal phosphate)lysine). 279–289 (VDVGGGLGIDY) lines the substrate pocket.

The protein belongs to the Orn/Lys/Arg decarboxylase class-II family. SpeA subfamily. The cofactor is Mg(2+). Pyridoxal 5'-phosphate serves as cofactor.

It carries out the reaction L-arginine + H(+) = agmatine + CO2. It participates in amine and polyamine biosynthesis; agmatine biosynthesis; agmatine from L-arginine: step 1/1. Catalyzes the biosynthesis of agmatine from arginine. This Xylella fastidiosa (strain M23) protein is Biosynthetic arginine decarboxylase.